The primary structure comprises 145 residues: MFLRNSVLRTAPVLRRGITTLTPVSTKLAPPAAASYSQAMKANNFVYVSGQIPYTPDNKPVQGSISEKAEQVFQNVKNILAESNSSLDNIVKVNVFLADMKNFAEFNSVYAKHFHTHKPARSCVGVASLPLNVDLEMEVIAVEKN.

Residues 1–17 constitute a mitochondrion transit peptide; that stretch reads MFLRNSVLRTAPVLRRG.

The protein belongs to the RutC family.

The protein localises to the mitochondrion matrix. In terms of biological role, plays a role in the maintenance of mitochondrial DNA. The chain is Protein MMF1, mitochondrial (MMF1) from Saccharomyces cerevisiae (strain ATCC 204508 / S288c) (Baker's yeast).